An 892-amino-acid polypeptide reads, in one-letter code: Alanine--tRNA ligase (892 aa).

Zn(2+) contacts are provided by histidine 593, histidine 597, cysteine 694, and histidine 698.

This sequence belongs to the class-II aminoacyl-tRNA synthetase family. The cofactor is Zn(2+).

The protein resides in the cytoplasm. It carries out the reaction tRNA(Ala) + L-alanine + ATP = L-alanyl-tRNA(Ala) + AMP + diphosphate. Functionally, catalyzes the attachment of alanine to tRNA(Ala) in a two-step reaction: alanine is first activated by ATP to form Ala-AMP and then transferred to the acceptor end of tRNA(Ala). Also edits incorrectly charged Ser-tRNA(Ala) and Gly-tRNA(Ala) via its editing domain. This chain is Alanine--tRNA ligase, found in Helicobacter hepaticus (strain ATCC 51449 / 3B1).